We begin with the raw amino-acid sequence, 142 residues long: Protein NIM1-INTERACTING 1 (142 aa).

The involved in NPR1/NIM1 interaction stretch occupies residues 47–53; it reads DTFFKLI. The short motif at 60–64 is the Nuclear localization signal element; that stretch reads RKRRR. Disordered stretches follow at residues 63 to 86 and 108 to 142; these read RREE…RSGI and MFVS…NLAL. Residues 110 to 141 adopt a coiled-coil conformation; sequence VSDHKEENTKVEQEEDQTEERNEDKALDLNLA. Residues 111–121 show a composition bias toward basic and acidic residues; that stretch reads SDHKEENTKVE.

Belongs to the NPR1-interactor family. Interacts with NPR1 C-terminal region.

It is found in the nucleus. The polypeptide is Protein NIM1-INTERACTING 1 (Arabidopsis thaliana (Mouse-ear cress)).